Here is a 341-residue protein sequence, read N- to C-terminus: Inositol monophosphatase 3 (341 aa).

A helical membrane pass occupies residues 11–31 (LGIAVFCLLGVGVIYHLYAGV). The Mg(2+) site is built by glutamate 117, aspartate 157, leucine 159, aspartate 160, and aspartate 283. Glutamate 117 is a substrate binding site. Substrate contacts are provided by residues 159–162 (LDAT) and aspartate 283.

It belongs to the inositol monophosphatase superfamily. Mg(2+) serves as cofactor.

It is found in the membrane. It catalyses the reaction a myo-inositol phosphate + H2O = myo-inositol + phosphate. The protein operates within polyol metabolism; myo-inositol biosynthesis; myo-inositol from D-glucose 6-phosphate: step 2/2. This is Inositol monophosphatase 3 (bpnt2) from Danio rerio (Zebrafish).